Reading from the N-terminus, the 274-residue chain is Mitochondrial S-adenosylmethionine carrier protein (274 aa).

3 Solcar repeats span residues 4-77 (PGFV…VKWF), 86-168 (LTPM…LKAL), and 177-265 (VDSW…THSL). 6 consecutive transmembrane segments (helical) span residues 5-25 (GFVA…LILF), 49-69 (IYAG…AFFI), 85-105 (YLTP…ACLI), 142-162 (RGYK…FPLW), 182-202 (SAVC…PLDV), and 238-258 (FAGV…FLGA).

The protein belongs to the mitochondrial carrier (TC 2.A.29) family. In terms of tissue distribution, widely expressed. Highly expressed in testis, with moderate expression in brain, heart, kidney, lung, skeletal muscle, pancreas, small intestine and liver, and low expression in spleen.

It is found in the mitochondrion inner membrane. It catalyses the reaction S-adenosyl-L-homocysteine(out) + S-adenosyl-L-methionine(in) = S-adenosyl-L-homocysteine(in) + S-adenosyl-L-methionine(out). Its activity is regulated as follows. Strongly inhibited by tannic acid and Bromocresol Purple. Mitochondrial S-adenosyl-L-methionine/S-adenosyl-L-homocysteine antiporter. Mediates the exchange of cytosolic S-adenosyl-L-methionine, the predominant methyl-group donor for macromolecule methylation processes, for mitochondrial S-adenosylhomocysteine(SAH), a by-product of methylation reactions. The polypeptide is Mitochondrial S-adenosylmethionine carrier protein (Homo sapiens (Human)).